The sequence spans 252 residues: Imidazole glycerol phosphate synthase subunit HisF (252 aa).

Active-site residues include Asp11 and Asp130.

The protein belongs to the HisA/HisF family. As to quaternary structure, heterodimer of HisH and HisF.

Its subcellular location is the cytoplasm. The catalysed reaction is 5-[(5-phospho-1-deoxy-D-ribulos-1-ylimino)methylamino]-1-(5-phospho-beta-D-ribosyl)imidazole-4-carboxamide + L-glutamine = D-erythro-1-(imidazol-4-yl)glycerol 3-phosphate + 5-amino-1-(5-phospho-beta-D-ribosyl)imidazole-4-carboxamide + L-glutamate + H(+). Its pathway is amino-acid biosynthesis; L-histidine biosynthesis; L-histidine from 5-phospho-alpha-D-ribose 1-diphosphate: step 5/9. Functionally, IGPS catalyzes the conversion of PRFAR and glutamine to IGP, AICAR and glutamate. The HisF subunit catalyzes the cyclization activity that produces IGP and AICAR from PRFAR using the ammonia provided by the HisH subunit. The chain is Imidazole glycerol phosphate synthase subunit HisF from Polynucleobacter asymbioticus (strain DSM 18221 / CIP 109841 / QLW-P1DMWA-1) (Polynucleobacter necessarius subsp. asymbioticus).